A 264-amino-acid chain; its full sequence is Phycocyanobilin:ferredoxin oxidoreductase (264 aa).

It belongs to the HY2 family.

It catalyses the reaction (2R,3Z)-phycocyanobilin + 4 oxidized [2Fe-2S]-[ferredoxin] = biliverdin IXalpha + 4 reduced [2Fe-2S]-[ferredoxin] + 4 H(+). In terms of biological role, catalyzes the four-electron reduction of biliverdin IX-alpha (2-electron reduction at both the A and D rings); the reaction proceeds via an isolatable 2-electron intermediate, 181,182-dihydrobiliverdin. The chain is Phycocyanobilin:ferredoxin oxidoreductase (pcyA) from Prochlorococcus marinus (strain MIT 9313).